The chain runs to 106 residues: Small ribosomal subunit protein bS16 (106 aa).

The protein belongs to the bacterial ribosomal protein bS16 family.

In Wolbachia pipientis wMel, this protein is Small ribosomal subunit protein bS16.